A 469-amino-acid chain; its full sequence is Melanopsin (469 aa).

Residues 1–71 (MDSPPGPTAP…VDVPDHAHYI (71 aa)) are Extracellular-facing. Asparagine 30 carries N-linked (GlcNAc...) asparagine glycosylation. The chain crosses the membrane as a helical span at residues 72 to 92 (LGTVILLVGLTGMLGNLTVIY). Topologically, residues 93–106 (TFCRSRSLRTPANM) are cytoplasmic. A helical membrane pass occupies residues 107–127 (LIINLAVSDFLMSFTQAPVFF). The Extracellular segment spans residues 128–143 (ASSLYKKWLFGETGCE). A disulfide bond links cysteine 142 and cysteine 220. A helical transmembrane segment spans residues 144–164 (FYAFCGAVLGITSMITLTAIA). Residues 165–187 (LDRYLVITRPLATIGMGSKRRTA) lie on the Cytoplasmic side of the membrane. A helical transmembrane segment spans residues 188–208 (LVLLGIWLYALAWSLPPFFGW). The Extracellular segment spans residues 209-237 (SAYVPEGLLTSCSWDYVTFTPQVRAYTML). A helical membrane pass occupies residues 238–258 (LFCFVFFLPLLVIIFCYISIF). The Cytoplasmic portion of the chain corresponds to 259-295 (RAIRETGRACEGWSESPQRRRQWHRLQSEWKMAKVAL). A helical transmembrane segment spans residues 296–316 (IVILLFVLSWAPYSTVALVAF). At 317 to 328 (AGYSHILTPYMS) the chain is on the extracellular side. Residues 329-349 (SVPAVIAKASAIHNPIVYAIT) traverse the membrane as a helical segment. Lysine 336 is modified (N6-(retinylidene)lysine). Residues 350 to 469 (HPKYRAAIAQ…SLDLGMQDAP (120 aa)) lie on the Cytoplasmic side of the membrane. The disordered stretch occupies residues 409–469 (GSESEVGWTD…SLDLGMQDAP (61 aa)).

This sequence belongs to the G-protein coupled receptor 1 family. Opsin subfamily.

It localises to the cell membrane. The protein resides in the cell projection. It is found in the axon. The protein localises to the dendrite. Its subcellular location is the perikaryon. Functionally, photoreceptor that binds cis-retinaldehydes. Contributes to pupillar reflex, photoentrainment and other non-image forming responses to light. May be involved in the optokinetic visual tracking response. May be involved in the regulation of retinal hyaloid vessel growth and regression. This is Melanopsin (OPN4) from Phodopus sungorus (Striped hairy-footed hamster).